The following is a 166-amino-acid chain: Putative 4-hydroxy-4-methyl-2-oxoglutarate aldolase 1 (166 aa).

At alanine 2 the chain carries N-acetylalanine. Substrate contacts are provided by residues 81–84 (GGNP) and arginine 103. Aspartate 104 is a binding site for a divalent metal cation.

This sequence belongs to the class II aldolase/RraA-like family. In terms of assembly, homotrimer. A divalent metal cation serves as cofactor.

It carries out the reaction 4-hydroxy-4-methyl-2-oxoglutarate = 2 pyruvate. It catalyses the reaction oxaloacetate + H(+) = pyruvate + CO2. Functionally, catalyzes the aldol cleavage of 4-hydroxy-4-methyl-2-oxoglutarate (HMG) into 2 molecules of pyruvate. Also contains a secondary oxaloacetate (OAA) decarboxylase activity due to the common pyruvate enolate transition state formed following C-C bond cleavage in the retro-aldol and decarboxylation reactions. The chain is Putative 4-hydroxy-4-methyl-2-oxoglutarate aldolase 1 from Arabidopsis thaliana (Mouse-ear cress).